We begin with the raw amino-acid sequence, 215 residues long: Ribonuclease T (215 aa).

An Exonuclease domain is found at 20 to 194 (VVIDVETAGF…YDTERTAVLF (175 aa)). Residues Asp23, Glu25, His181, and Asp186 each contribute to the Mg(2+) site. Catalysis depends on His181, which acts as the Proton donor/acceptor.

Belongs to the RNase T family. As to quaternary structure, homodimer. It depends on Mg(2+) as a cofactor.

In terms of biological role, trims short 3' overhangs of a variety of RNA species, leaving a one or two nucleotide 3' overhang. Responsible for the end-turnover of tRNA: specifically removes the terminal AMP residue from uncharged tRNA (tRNA-C-C-A). Also appears to be involved in tRNA biosynthesis. The polypeptide is Ribonuclease T (Shigella boydii serotype 4 (strain Sb227)).